Consider the following 446-residue polypeptide: Phosphoglucosamine mutase (446 aa).

Catalysis depends on serine 88, which acts as the Phosphoserine intermediate. 4 residues coordinate Mg(2+): serine 88, aspartate 231, aspartate 233, and aspartate 235. A Phosphoserine modification is found at serine 88.

Belongs to the phosphohexose mutase family. The cofactor is Mg(2+). Post-translationally, activated by phosphorylation.

The enzyme catalyses alpha-D-glucosamine 1-phosphate = D-glucosamine 6-phosphate. Its function is as follows. Catalyzes the conversion of glucosamine-6-phosphate to glucosamine-1-phosphate. This is Phosphoglucosamine mutase from Methanococcus vannielii (strain ATCC 35089 / DSM 1224 / JCM 13029 / OCM 148 / SB).